The following is a 214-amino-acid chain: Pyridoxine/pyridoxamine 5'-phosphate oxidase (214 aa).

Residues Arg-8–Tyr-11 and Lys-66 each bind substrate. FMN-binding positions include Arg-61–Lys-66, Phe-76–Thr-77, Arg-82, Lys-83, and Gln-105. Tyr-123, Arg-127, and Ser-131 together coordinate substrate. FMN-binding positions include Gln-140 to Ser-141 and Trp-184. Arg-190–His-192 provides a ligand contact to substrate. Arg-194 is an FMN binding site.

This sequence belongs to the pyridoxamine 5'-phosphate oxidase family. As to quaternary structure, homodimer. FMN is required as a cofactor.

It carries out the reaction pyridoxamine 5'-phosphate + O2 + H2O = pyridoxal 5'-phosphate + H2O2 + NH4(+). The catalysed reaction is pyridoxine 5'-phosphate + O2 = pyridoxal 5'-phosphate + H2O2. It participates in cofactor metabolism; pyridoxal 5'-phosphate salvage; pyridoxal 5'-phosphate from pyridoxamine 5'-phosphate: step 1/1. Its pathway is cofactor metabolism; pyridoxal 5'-phosphate salvage; pyridoxal 5'-phosphate from pyridoxine 5'-phosphate: step 1/1. Catalyzes the oxidation of either pyridoxine 5'-phosphate (PNP) or pyridoxamine 5'-phosphate (PMP) into pyridoxal 5'-phosphate (PLP). The polypeptide is Pyridoxine/pyridoxamine 5'-phosphate oxidase (Burkholderia ambifaria (strain ATCC BAA-244 / DSM 16087 / CCUG 44356 / LMG 19182 / AMMD) (Burkholderia cepacia (strain AMMD))).